The primary structure comprises 451 residues: 23S rRNA (uracil(1939)-C(5))-methyltransferase RlmD (451 aa).

The tract at residues 1-21 (MAKHERGLRFQPTGGVKSVQI) is disordered. A TRAM domain is found at 20 to 78 (QIPAGKKQRLSIERLSDDGRGIAFLEGKTWFVAGSLAGEEVEARVLNARGKVVEARTER). Residues cysteine 91, cysteine 97, cysteine 100, and cysteine 179 each coordinate [4Fe-4S] cluster. S-adenosyl-L-methionine is bound by residues glutamine 283, phenylalanine 312, asparagine 317, glutamate 333, aspartate 360, and aspartate 381. The active-site Nucleophile is the cysteine 407.

The protein belongs to the class I-like SAM-binding methyltransferase superfamily. RNA M5U methyltransferase family. RlmD subfamily.

The enzyme catalyses uridine(1939) in 23S rRNA + S-adenosyl-L-methionine = 5-methyluridine(1939) in 23S rRNA + S-adenosyl-L-homocysteine + H(+). Its function is as follows. Catalyzes the formation of 5-methyl-uridine at position 1939 (m5U1939) in 23S rRNA. The protein is 23S rRNA (uracil(1939)-C(5))-methyltransferase RlmD of Pseudomonas syringae pv. tomato (strain ATCC BAA-871 / DC3000).